A 267-amino-acid chain; its full sequence is Phosphate import ATP-binding protein PstB 1 (267 aa).

Residues 21-262 enclose the ABC transporter domain; that stretch reads LETKDLHVYY…AALQSTSDYV (242 aa). 53–60 lines the ATP pocket; the sequence is GPSGCGKS.

The protein belongs to the ABC transporter superfamily. Phosphate importer (TC 3.A.1.7) family. As to quaternary structure, the complex is composed of two ATP-binding proteins (PstB), two transmembrane proteins (PstC and PstA) and a solute-binding protein (PstS).

The protein resides in the cell membrane. The catalysed reaction is phosphate(out) + ATP + H2O = ADP + 2 phosphate(in) + H(+). Its function is as follows. Part of the ABC transporter complex PstSACB involved in phosphate import. Responsible for energy coupling to the transport system. This Streptococcus thermophilus (strain CNRZ 1066) protein is Phosphate import ATP-binding protein PstB 1.